Consider the following 110-residue polypeptide: Eukaryotic translation initiation factor eIF1 (110 aa).

It belongs to the SUI1 family.

Probably involved in translation. The chain is Eukaryotic translation initiation factor eIF1 from Anopheles gambiae (African malaria mosquito).